A 186-amino-acid polypeptide reads, in one-letter code: Outer-membrane lipoprotein LolB (186 aa).

A signal peptide spans 1–16; that stretch reads MRRLAVIASLAWALGG. The N-palmitoyl cysteine moiety is linked to residue Cys-17. Cys-17 is lipidated: S-diacylglycerol cysteine.

Belongs to the LolB family. As to quaternary structure, monomer.

It localises to the cell outer membrane. Functionally, plays a critical role in the incorporation of lipoproteins in the outer membrane after they are released by the LolA protein. The protein is Outer-membrane lipoprotein LolB of Thiobacillus denitrificans (strain ATCC 25259 / T1).